A 158-amino-acid chain; its full sequence is Phosphopantetheine adenylyltransferase (158 aa).

Threonine 10 is a substrate binding site. Residues 10–11 (TF) and histidine 18 contribute to the ATP site. Residues lysine 42, leucine 74, and arginine 88 each contribute to the substrate site. Residues 89 to 91 (GIR), glutamate 99, and 124 to 130 (WRYLSST) each bind ATP.

Belongs to the bacterial CoaD family. Homohexamer. Mg(2+) is required as a cofactor.

The protein localises to the cytoplasm. It catalyses the reaction (R)-4'-phosphopantetheine + ATP + H(+) = 3'-dephospho-CoA + diphosphate. Its pathway is cofactor biosynthesis; coenzyme A biosynthesis; CoA from (R)-pantothenate: step 4/5. Reversibly transfers an adenylyl group from ATP to 4'-phosphopantetheine, yielding dephospho-CoA (dPCoA) and pyrophosphate. This Actinobacillus pleuropneumoniae serotype 7 (strain AP76) protein is Phosphopantetheine adenylyltransferase.